A 348-amino-acid polypeptide reads, in one-letter code: MIPATYTLSQITAQLGGEWRGEDISVTAVRPLADAQAEHISFLANPKYKAEVHDSSAGAVIVSAKAADGFEGRNLIVADDPYLYFAKVARLFSPVVKARGGIHPTAVVEPSATVPASCEIGANAYIGANTVLGEGCRILANAVVQHDCKLGDEVVLHPNAVVYYGCTLGRRVEIHSGAVIGADGFGLAFAGDSWFKIPQTGAVTLGDDVEIGSNTNIDRGAMSDTTVGNGTKIDNQVQIGHNCKIGSHTVIAAKTGISGSVTIGSYCIIGGGVGTVGHIEIADKTTIGGGTSVTHSITESGKHLAGIFPMSTHKEWARNAVYIHRLSEMNKRLKTLEQQLSDAGQDSK.

Catalysis depends on H241, which acts as the Proton acceptor.

The protein belongs to the transferase hexapeptide repeat family. LpxD subfamily. As to quaternary structure, homotrimer.

The enzyme catalyses a UDP-3-O-[(3R)-3-hydroxyacyl]-alpha-D-glucosamine + a (3R)-hydroxyacyl-[ACP] = a UDP-2-N,3-O-bis[(3R)-3-hydroxyacyl]-alpha-D-glucosamine + holo-[ACP] + H(+). It participates in bacterial outer membrane biogenesis; LPS lipid A biosynthesis. In terms of biological role, catalyzes the N-acylation of UDP-3-O-acylglucosamine using 3-hydroxyacyl-ACP as the acyl donor. Is involved in the biosynthesis of lipid A, a phosphorylated glycolipid that anchors the lipopolysaccharide to the outer membrane of the cell. In Neisseria meningitidis serogroup C (strain 053442), this protein is UDP-3-O-acylglucosamine N-acyltransferase.